The sequence spans 77 residues: Small ribosomal subunit protein bS18 (77 aa).

The protein belongs to the bacterial ribosomal protein bS18 family. As to quaternary structure, part of the 30S ribosomal subunit. Forms a tight heterodimer with protein bS6.

Functionally, binds as a heterodimer with protein bS6 to the central domain of the 16S rRNA, where it helps stabilize the platform of the 30S subunit. This Halalkalibacterium halodurans (strain ATCC BAA-125 / DSM 18197 / FERM 7344 / JCM 9153 / C-125) (Bacillus halodurans) protein is Small ribosomal subunit protein bS18.